A 356-amino-acid chain; its full sequence is S-adenosylmethionine:tRNA ribosyltransferase-isomerase (356 aa).

Belongs to the QueA family. As to quaternary structure, monomer.

The protein localises to the cytoplasm. It catalyses the reaction 7-aminomethyl-7-carbaguanosine(34) in tRNA + S-adenosyl-L-methionine = epoxyqueuosine(34) in tRNA + adenine + L-methionine + 2 H(+). It participates in tRNA modification; tRNA-queuosine biosynthesis. Transfers and isomerizes the ribose moiety from AdoMet to the 7-aminomethyl group of 7-deazaguanine (preQ1-tRNA) to give epoxyqueuosine (oQ-tRNA). This chain is S-adenosylmethionine:tRNA ribosyltransferase-isomerase, found in Escherichia coli (strain ATCC 8739 / DSM 1576 / NBRC 3972 / NCIMB 8545 / WDCM 00012 / Crooks).